The primary structure comprises 398 residues: Meiosis-specific protein SPO11 (398 aa).

In terms of domain architecture, Topo IIA-type catalytic spans 40–175 (CSNADVLAHI…LNIIPAQKGL (136 aa)). The active-site O-(5'-phospho-DNA)-tyrosine intermediate is the Tyr135. Glu233 and Asp288 together coordinate Mg(2+).

This sequence belongs to the TOP6A family. The cofactor is Mg(2+).

Its subcellular location is the nucleus. The protein resides in the chromosome. It carries out the reaction ATP-dependent breakage, passage and rejoining of double-stranded DNA.. Functionally, required for meiotic recombination. Mediates DNA cleavage that forms the double-strand breaks (DSB) that initiate meiotic recombination. The action of SPO11 is important in setting off a regulatory chain of events encompassing 5' to 3' resection. When there are no SPO11-DSBs, resection of a site specific VDE-DSB takes place but it is faster than in wild-type meiosis and increases the risk of uncovering flanking homology. The chain is Meiosis-specific protein SPO11 (SPO11) from Saccharomyces cerevisiae (strain ATCC 204508 / S288c) (Baker's yeast).